Reading from the N-terminus, the 120-residue chain is UPF0382 membrane protein SSP2132 (120 aa).

4 helical membrane passes run 3–23 (VFIILGALNAMMAVGTGAFGA), 46–66 (MYHGLGLLAIGIISGTTSINV), 69–89 (VGWLLFFGIVFFSGSLYILAL), and 94–114 (IIGAITPIGGVLFIVGWLMLV).

Belongs to the UPF0382 family.

Its subcellular location is the cell membrane. This is UPF0382 membrane protein SSP2132 from Staphylococcus saprophyticus subsp. saprophyticus (strain ATCC 15305 / DSM 20229 / NCIMB 8711 / NCTC 7292 / S-41).